The chain runs to 419 residues: UDP-N-acetylglucosamine 1-carboxyvinyltransferase (419 aa).

Phosphoenolpyruvate is bound at residue 22-23 (KN). UDP-N-acetyl-alpha-D-glucosamine is bound at residue Arg93. Cys117 functions as the Proton donor in the catalytic mechanism. A 2-(S-cysteinyl)pyruvic acid O-phosphothioketal modification is found at Cys117. Residues Asp306 and Ile328 each coordinate UDP-N-acetyl-alpha-D-glucosamine.

Belongs to the EPSP synthase family. MurA subfamily.

Its subcellular location is the cytoplasm. The enzyme catalyses phosphoenolpyruvate + UDP-N-acetyl-alpha-D-glucosamine = UDP-N-acetyl-3-O-(1-carboxyvinyl)-alpha-D-glucosamine + phosphate. The protein operates within cell wall biogenesis; peptidoglycan biosynthesis. Functionally, cell wall formation. Adds enolpyruvyl to UDP-N-acetylglucosamine. The polypeptide is UDP-N-acetylglucosamine 1-carboxyvinyltransferase (Ruthia magnifica subsp. Calyptogena magnifica).